The primary structure comprises 931 residues: Phosphoenolpyruvate carboxylase (931 aa).

Residues His-138 and Lys-594 contribute to the active site.

The protein belongs to the PEPCase type 1 family. It depends on Mg(2+) as a cofactor.

The enzyme catalyses oxaloacetate + phosphate = phosphoenolpyruvate + hydrogencarbonate. Forms oxaloacetate, a four-carbon dicarboxylic acid source for the tricarboxylic acid cycle. The protein is Phosphoenolpyruvate carboxylase of Streptococcus agalactiae serotype III (strain NEM316).